A 129-amino-acid chain; its full sequence is Small ribosomal subunit protein uS11 (129 aa).

The protein belongs to the universal ribosomal protein uS11 family. As to quaternary structure, part of the 30S ribosomal subunit. Interacts with proteins S7 and S18. Binds to IF-3.

Located on the platform of the 30S subunit, it bridges several disparate RNA helices of the 16S rRNA. Forms part of the Shine-Dalgarno cleft in the 70S ribosome. The protein is Small ribosomal subunit protein uS11 of Cereibacter sphaeroides (strain ATCC 17025 / ATH 2.4.3) (Rhodobacter sphaeroides).